A 223-amino-acid chain; its full sequence is DNA-directed RNA polymerase III subunit RPC7 (223 aa).

The segment at 110–223 is disordered; sequence MMPRNKCKKA…SDDNMDEATY (114 aa). Residues 114 to 125 show a composition bias toward basic residues; that stretch reads NKCKKAGPKPKK. T133 carries the phosphothreonine modification. Residues 140-155 are compositionally biased toward basic and acidic residues; sequence DVLKKMEELEKRGDGE. S157 is subject to Phosphoserine. Residues 164–173 are compositionally biased toward basic and acidic residues; it reads KEGSKEKSKE. Composition is skewed to acidic residues over residues 174–198 and 205–223; these read GDDDDDDDAAEQEEYDEEEQEEEND and EDGDDFGADSDDNMDEATY.

It belongs to the eukaryotic RPC7 RNA polymerase subunit family. In terms of assembly, component of the RNA polymerase III complex consisting of 17 subunits: a ten-subunit horseshoe-shaped catalytic core composed of POLR3A/RPC1, POLR3B/RPC2, POLR1C/RPAC1, POLR1D/RPAC2, POLR3K/RPC10, POLR2E/RPABC1, POLR2F/RPABC2, POLR2H/RPABC3, POLR2K/RPABC4 and POLR2L/RPABC5; a mobile stalk composed of two subunits POLR3H/RPC8 and CRCP/RPC9, protruding from the core and functioning primarily in transcription initiation; and additional subunits homologous to general transcription factors of the RNA polymerase II machinery, POLR3C/RPC3-POLR3F/RPC6-POLR3G/RPC7 heterotrimer required for transcription initiation and POLR3D/RPC4-POLR3E/RPC5 heterodimer involved in both transcription initiation and termination. Directly interacts with POLR3C/RPC62. Also found in a trimeric complex with POLR3C/RPC3 and POLR3GL. As to expression, barely detectable in differentiated tissues. Expressed in embryonic stem cells and in other dividing cells, such as some tumor cell lines.

It is found in the nucleus. It localises to the cytoplasm. Functionally, DNA-dependent RNA polymerase catalyzes the transcription of DNA into RNA using the four ribonucleoside triphosphates as substrates. Specific peripheric component of RNA polymerase III (Pol III) which synthesizes small non-coding RNAs including 5S rRNA, snRNAs, tRNAs and miRNAs from at least 500 distinct genomic loci. Acts as a long tether that bridges POLR3C/RPC3-POLR3F/RPC6-POLR3G/RPC7 heterotrimer and the mobile stalk of Pol III, coordinating the dynamics of Pol III stalk and clamp modules during the transition from apo to elongation state. Pol III exists as two alternative complexes defined by the mutually exclusive incorporation of subunit POLR3G/RPC7alpha or POLR3GL/RPC7beta. POLR3G/RPC7alpha modulates Pol III transcriptome by specifically enhancing the transcription of snaR-A non-coding RNAs. At resting state, occupies the active site of apo Pol III and keeps Pol III in an autoinhibitory mode, preventing non-specific transcription. Pol III plays a key role in sensing and limiting infection by intracellular bacteria and DNA viruses. Acts as a nuclear and cytosolic DNA sensor involved in innate immune response. Can sense non-self dsDNA that serves as template for transcription into dsRNA. The non-self RNA polymerase III transcripts, such as Epstein-Barr virus-encoded RNAs (EBERs), induce type I interferon and NF-kappa-B through the RIG-I pathway. The sequence is that of DNA-directed RNA polymerase III subunit RPC7 from Homo sapiens (Human).